A 405-amino-acid chain; its full sequence is Plasma serine protease inhibitor (405 aa).

Residues 1-19 (MRFFPILCLVLFISHGVAS) form the signal peptide. The propeptide at 20–24 (RRHSH) is removed in mature form. Residue Asn247 is glycosylated (N-linked (GlcNAc...) asparagine).

This sequence belongs to the serpin family. Forms protease inhibiting heterodimers in extracellular body fluids with serine proteases such as activated protein C/coagulation factor V/F5, acrosin/ACR, chymotrypsinogen B/CTRB1, prothrombin/F2, factor Xa/F10, factor XI/F11, kallikrein/KLKB1, tissue kallikrein, trypsin/PRSS1, prostate specific antigen/KLK3, tissue plasminogen activator/PLAT and urinary plasminogen activator/PLAU. Forms membrane-anchored serine proteases inhibiting heterodimers with TMPRSS7 and TMPRSS11E. Interacts with SEMG2. N-glycosylated; glycans consist of a mixture of sialylated bi- (including sialyl-Lewis X epitopes), tri- and tetra-antennary complex-type chains; affects the maximal heparin- and thrombomodulin-enhanced rates of thrombin inhibition. O-glycosylated; further modified with 2 sialic acid residues. Proteolytically cleaved at the N-terminus; inhibits slightly the heparin- and thrombomodulin-enhanced rates of thrombin inhibition. In terms of processing, proteolytically cleaved. Inhibition of proteases is accompanied by formation of a stable enzyme-inhibitor complex and by degradation of the serpin to lower molecular weight derivatives. Not detected in blood plasma (at protein level). Expressed in testis, epididymis, seminal vesicles, prostate and ovaries.

It is found in the secreted. The protein resides in the extracellular space. Its inhibitory activity is greatly enhanced in the presence of glycosaminoglycans, heparin, thrombomodulin and phospholipids vesicles. Functionally, heparin-dependent serine protease inhibitor acting in body fluids and secretions. Inactivates serine proteases by binding irreversibly to their serine activation site. Involved in the regulation of intravascular and extravascular proteolytic activities. Plays hemostatic roles in the blood plasma. Acts as a procoagulant and pro-inflammatory factor by inhibiting the anticoagulant activated protein C factor as well as the generation of activated protein C factor by the thrombin/thrombomodulin complex. Acts as an anticoagulant factor by inhibiting blood coagulation factors like prothrombin, factor XI, factor Xa, plasma kallikrein and fibrinolytic enzymes such as tissue- and urinary-type plasminogen activators. In seminal plasma, inactivates several serine proteases implicated in the reproductive system. Inhibits the serpin acrosin; indirectly protects component of the male genital tract from being degraded by excessive released acrosin. Inhibits tissue- and urinary-type plasminogen activator, prostate-specific antigen and kallikrein activities; has a control on the sperm motility and fertilization. Inhibits the activated protein C-catalyzed degradation of SEMG1 and SEMG2; regulates the degradation of semenogelin during the process of transfer of spermatozoa from the male reproductive tract into the female tract. In urine, inhibits urinary-type plasminogen activator and kallikrein activities. Inactivates membrane-anchored serine proteases activities such as MPRSS7 and TMPRSS11E. Inhibits urinary-type plasminogen activator-dependent tumor cell invasion and metastasis. May also play a non-inhibitory role in seminal plasma and urine as a hydrophobic hormone carrier by its binding to retinoic acid. This is Plasma serine protease inhibitor (Serpina5) from Mus musculus (Mouse).